The sequence spans 329 residues: Flotillin-like protein FloA (329 aa).

The helical transmembrane segment at 4–24 (IWGFLILILVLIFLGVFFSFV) threads the bilayer.

The protein belongs to the flotillin-like FloA family. Homooligomerizes.

The protein localises to the cell membrane. The protein resides in the membrane raft. Found in functional membrane microdomains (FMM) that may be equivalent to eukaryotic membrane rafts. FMMs are highly dynamic and increase in number as cells age. Flotillins are thought to be important factors in membrane fluidity. This is Flotillin-like protein FloA from Dictyoglomus turgidum (strain DSM 6724 / Z-1310).